The primary structure comprises 230 residues: MNENVIALDGPAGSGKSTVARQIAERIGFNYLDTGAFYRALTLYLFRLHGNSPNTESFADWVKTSEAERSLSDIRILCEFSAGKENRIFLNGEEVSLAIRTPEITREIKHIAKRRIYRNFVNQELHSLAKLHKLIIDGRDIGTEVFPDAKFKFYLTASSKVRAERRFLQLQEQGIEADRDEIEKEIILRDKSDMEREIAPLYQANDAILIDTDILSKNSVISKILKILDR.

Residue glycine 10–threonine 18 coordinates ATP.

The protein belongs to the cytidylate kinase family. Type 1 subfamily.

Its subcellular location is the cytoplasm. The catalysed reaction is CMP + ATP = CDP + ADP. The enzyme catalyses dCMP + ATP = dCDP + ADP. The sequence is that of Cytidylate kinase from Leptospira borgpetersenii serovar Hardjo-bovis (strain L550).